Here is a 459-residue protein sequence, read N- to C-terminus: tRNA modification GTPase MnmE (459 aa).

(6S)-5-formyl-5,6,7,8-tetrahydrofolate-binding residues include Arg20, Glu85, and Arg124. Residues 221-380 (GLSTVIIGRP…LEMAIQSLFF (160 aa)) form the TrmE-type G domain. K(+) is bound at residue Asn231. Residues 231 to 236 (NVGKSS), 250 to 256 (TDIPGTT), and 275 to 278 (DTAG) contribute to the GTP site. Ser235 provides a ligand contact to Mg(2+). Residues Thr250, Ile252, and Thr255 each contribute to the K(+) site. Thr256 contacts Mg(2+). Lys459 serves as a coordination point for (6S)-5-formyl-5,6,7,8-tetrahydrofolate.

This sequence belongs to the TRAFAC class TrmE-Era-EngA-EngB-Septin-like GTPase superfamily. TrmE GTPase family. Homodimer. Heterotetramer of two MnmE and two MnmG subunits. Requires K(+) as cofactor.

Its subcellular location is the cytoplasm. Functionally, exhibits a very high intrinsic GTPase hydrolysis rate. Involved in the addition of a carboxymethylaminomethyl (cmnm) group at the wobble position (U34) of certain tRNAs, forming tRNA-cmnm(5)s(2)U34. The protein is tRNA modification GTPase MnmE of Bacillus pumilus (strain SAFR-032).